A 254-amino-acid polypeptide reads, in one-letter code: Dihydroorotate dehydrogenase B (NAD(+)), electron transfer subunit (254 aa).

The region spanning Met-1–Ile-99 is the FAD-binding FR-type domain. FAD-binding positions include Arg-50–Ser-53, Leu-67–Arg-69, and Gly-74–Thr-75. Cys-218, Cys-223, Cys-226, and Cys-241 together coordinate [2Fe-2S] cluster.

The protein belongs to the PyrK family. In terms of assembly, heterotetramer of 2 PyrK and 2 PyrD type B subunits. [2Fe-2S] cluster serves as cofactor. The cofactor is FAD.

It participates in pyrimidine metabolism; UMP biosynthesis via de novo pathway; orotate from (S)-dihydroorotate (NAD(+) route): step 1/1. Responsible for channeling the electrons from the oxidation of dihydroorotate from the FMN redox center in the PyrD type B subunit to the ultimate electron acceptor NAD(+). This is Dihydroorotate dehydrogenase B (NAD(+)), electron transfer subunit from Listeria monocytogenes serotype 4b (strain F2365).